The sequence spans 678 residues: UvrABC system protein C (678 aa).

The GIY-YIG domain maps to 16–95 (VEPGVYRFRD…IKEFDPRFNI (80 aa)). A UVR domain is found at 208–243 (DRLIREMEQQMTAAAEDLDFERAARLRDNIGAMRRA). Residues 649 to 667 (EAPPEPGAEAPPDSGAAAA) show a composition bias toward low complexity. The disordered stretch occupies residues 649–678 (EAPPEPGAEAPPDSGAAAAVMGNDQSRVPG).

It belongs to the UvrC family. In terms of assembly, interacts with UvrB in an incision complex.

Its subcellular location is the cytoplasm. Its function is as follows. The UvrABC repair system catalyzes the recognition and processing of DNA lesions. UvrC both incises the 5' and 3' sides of the lesion. The N-terminal half is responsible for the 3' incision and the C-terminal half is responsible for the 5' incision. The chain is UvrABC system protein C from Mycolicibacterium gilvum (strain PYR-GCK) (Mycobacterium gilvum (strain PYR-GCK)).